A 96-amino-acid polypeptide reads, in one-letter code: Interleukin-8 (96 aa).

An N-terminal signal peptide occupies residues 1–22 (MTSKLAIALLATFMLSAALCEA). The residue at position 27 (Arg-27) is a Citrulline. 2 disulfides stabilise this stretch: Cys-34–Cys-61 and Cys-36–Cys-78.

It belongs to the intercrine alpha (chemokine CxC) family. In terms of assembly, homodimer. Interacts with TNFAIP6 (via Link domain); this interaction interferes with chemokine binding to glycosaminoglycans. Post-translationally, citrullination at Arg-27 prevents proteolysis, and dampens tissue inflammation, it also enhances leukocytosis, possibly through impaired chemokine clearance from the blood circulation.

It is found in the secreted. Functionally, chemotactic factor that mediates inflammatory response by attracting neutrophils, basophils, and T-cells to clear pathogens and protect the host from infection. Also plays an important role in neutrophil activation. Released in response to an inflammatory stimulus, exerts its effect by binding to the G-protein-coupled receptors CXCR1 and CXCR2, primarily found in neutrophils, monocytes and endothelial cells. G-protein heterotrimer (alpha, beta, gamma subunits) constitutively binds to CXCR1/CXCR2 receptor and activation by IL8 leads to beta and gamma subunits release from Galpha (GNAI2 in neutrophils) and activation of several downstream signaling pathways including PI3K and MAPK pathways. This Dasypus novemcinctus (Nine-banded armadillo) protein is Interleukin-8 (CXCL8).